The chain runs to 799 residues: Lon protease (799 aa).

In terms of domain architecture, Lon N-terminal spans 7–200; it reads LPVLPLRDIV…KVFALMEGEI (194 aa). An ATP-binding site is contributed by 352 to 359; it reads GPPGVGKT. The Lon proteolytic domain maps to 587–768; it reads VDQVGIVTGL…DEVLKHALTG (182 aa). Active-site residues include S674 and K717. A disordered region spans residues 772–799; that stretch reads PVEWNEAEEPITTSAKKDDGDSDAMLTH.

It belongs to the peptidase S16 family. Homohexamer. Organized in a ring with a central cavity.

Its subcellular location is the cytoplasm. It catalyses the reaction Hydrolysis of proteins in presence of ATP.. Functionally, ATP-dependent serine protease that mediates the selective degradation of mutant and abnormal proteins as well as certain short-lived regulatory proteins. Required for cellular homeostasis and for survival from DNA damage and developmental changes induced by stress. Degrades polypeptides processively to yield small peptide fragments that are 5 to 10 amino acids long. Binds to DNA in a double-stranded, site-specific manner. CcrM is an important target of the Lon protease pathway in C.crescentus. This is Lon protease from Caulobacter vibrioides (strain ATCC 19089 / CIP 103742 / CB 15) (Caulobacter crescentus).